The chain runs to 335 residues: Erlin-2-A (335 aa).

Topologically, residues 1 to 2 (MS) are cytoplasmic. The chain crosses the membrane as a helical span at residues 3–23 (HAGAIVGLGVALIAAALFSAI). The Lumenal portion of the chain corresponds to 24–335 (HKIEEGHVGV…GLDEAASAEE (312 aa)). The N-linked (GlcNAc...) asparagine glycan is linked to N106.

It belongs to the band 7/mec-2 family.

Its subcellular location is the endoplasmic reticulum membrane. Mediates the endoplasmic reticulum-associated degradation (ERAD) of inositol 1,4,5-trisphosphate receptors (IP3Rs). Promotes sterol-accelerated ERAD of HMGCR. Involved in regulation of cellular cholesterol homeostasis by regulation the SREBP signaling pathway. The polypeptide is Erlin-2-A (erlin2-a) (Xenopus laevis (African clawed frog)).